A 159-amino-acid polypeptide reads, in one-letter code: Transcription elongation factor GreA (159 aa).

A coiled-coil region spans residues 45-67 (NAEYHEARKEQSFVEGKIRELQL).

Belongs to the GreA/GreB family.

Functionally, necessary for efficient RNA polymerase transcription elongation past template-encoded arresting sites. The arresting sites in DNA have the property of trapping a certain fraction of elongating RNA polymerases that pass through, resulting in locked ternary complexes. Cleavage of the nascent transcript by cleavage factors such as GreA or GreB allows the resumption of elongation from the new 3'terminus. GreA releases sequences of 2 to 3 nucleotides. This is Transcription elongation factor GreA from Neorickettsia sennetsu (strain ATCC VR-367 / Miyayama) (Ehrlichia sennetsu).